The following is a 24-amino-acid chain: Antimicrobial peptide PGQ (24 aa).

It belongs to the gastrin/cholecystokinin family. Magainin subfamily. In terms of tissue distribution, is synthesized in the stomach and stored in a novel granular multinucleated cell in the gastric mucosa. It is stored as active, processed peptides in large granules within the granular gland secretions of the skin.

It localises to the secreted. Functionally, antimicrobial peptide. The chain is Antimicrobial peptide PGQ (pgq) from Xenopus laevis (African clawed frog).